The sequence spans 402 residues: MMGIKSRHLYDRLTKIVIDKDLSAFNEISPSQLIPQLSEHFSITIPKEIFNYNEDQEEDLLHRLKELSRYLVVKFAKRDKYPFTIQRICELSYHPLQYFPVHSLQKFVSAMEKCCLVNTDWTPRLGKECPNTNPMEDVSLIPIEWIRTNKEDEKSLQAFISKIETIVAVNFGYDDFDDDNEDGTDHDIGRGYDNHGDVLIEEYEEMDEEFEDEDYEDHEDEEEDEEDEDNDSDVDEMEAEEVEEDASDDISIGEIAENDDQDNAHTDVTDTQLKYNGVPIEEELRLSSTSSVLSVSSHAANEDENESILSRKRNVTELDDYQYKETKENDGFITTPKKSKMPLNEFGSSSSMVSPVVSNQEDPSRNDDSRINTFISPDTTNSVTQAEKNELSTSPLQDKKRM.

Over residues 206–248 (MDEEFEDEDYEDHEDEEEDEEDEDNDSDVDEMEAEEVEEDASD) the composition is skewed to acidic residues. 3 disordered regions span residues 206 to 270 (MDEE…DVTD), 291 to 311 (SVLS…ILSR), and 331 to 402 (GFIT…KKRM). The segment covering 348 to 358 (SSSSMVSPVVS) has biased composition (low complexity). Polar residues predominate over residues 371–396 (INTFISPDTTNSVTQAEKNELSTSPL).

The protein belongs to the PPP4R2 family. As to quaternary structure, regulatory subunit (R2) of the histone H2A phosphatase complex (HTP-C) consisting of PPH3, PSY2 and PSY4.

Its subcellular location is the nucleus. Its function is as follows. Regulatory subunit of the histone H2A phosphatase complex, which dephosphorylates H2AS128ph (gamma-H2A) that has been displaced from sites of DNA lesions in the double-stranded DNA break repair process. Dephosphorylation is necessary for efficient recovery from the DNA damage checkpoint. This Kluyveromyces lactis (strain ATCC 8585 / CBS 2359 / DSM 70799 / NBRC 1267 / NRRL Y-1140 / WM37) (Yeast) protein is Serine/threonine-protein phosphatase 4 regulatory subunit 2 (PSY4).